The chain runs to 251 residues: Uridylate kinase (251 aa).

24 to 27 (KISG) contacts ATP. Positions 32–37 (GDQGFG) are involved in allosteric activation by GTP. Glycine 66 lines the UMP pocket. Residues glycine 67 and arginine 71 each coordinate ATP. UMP contacts are provided by residues aspartate 86 and 147–154 (TGNPYFTT). ATP is bound by residues asparagine 175, tyrosine 181, and aspartate 184.

The protein belongs to the UMP kinase family. Homohexamer.

It is found in the cytoplasm. It catalyses the reaction UMP + ATP = UDP + ADP. The protein operates within pyrimidine metabolism; CTP biosynthesis via de novo pathway; UDP from UMP (UMPK route): step 1/1. Its activity is regulated as follows. Allosterically activated by GTP. Inhibited by UTP. Its function is as follows. Catalyzes the reversible phosphorylation of UMP to UDP. The polypeptide is Uridylate kinase (Ruegeria pomeroyi (strain ATCC 700808 / DSM 15171 / DSS-3) (Silicibacter pomeroyi)).